The primary structure comprises 84 residues: Putative membrane protein insertion efficiency factor (84 aa).

This sequence belongs to the UPF0161 family.

It is found in the cell inner membrane. In terms of biological role, could be involved in insertion of integral membrane proteins into the membrane. This chain is Putative membrane protein insertion efficiency factor, found in Shewanella pealeana (strain ATCC 700345 / ANG-SQ1).